Reading from the N-terminus, the 351-residue chain is Phenylalanine--tRNA ligase alpha subunit (351 aa).

Residue Glu-266 coordinates Mg(2+).

The protein belongs to the class-II aminoacyl-tRNA synthetase family. Phe-tRNA synthetase alpha subunit type 1 subfamily. Tetramer of two alpha and two beta subunits. Mg(2+) serves as cofactor.

It localises to the cytoplasm. The catalysed reaction is tRNA(Phe) + L-phenylalanine + ATP = L-phenylalanyl-tRNA(Phe) + AMP + diphosphate + H(+). This Anaplasma marginale (strain St. Maries) protein is Phenylalanine--tRNA ligase alpha subunit.